Reading from the N-terminus, the 356-residue chain is Guanine nucleotide-binding protein alpha-2 subunit (356 aa).

Residue Gly2 is the site of N-myristoyl glycine attachment. Cys4 carries the S-palmitoyl cysteine lipid modification. The G-alpha domain occupies 35–356 (REVKLLLLGA…LTNNLRDIVL (322 aa)). Residues 38–51 (KLLLLGAGESGKST) form a G1 motif region. GTP contacts are provided by Glu46, Ser47, Gly48, Lys49, Ser50, Thr51, Asp153, Leu178, Thr184, Gly206, Asn272, Lys273, Asp275, and Ala329. Ser50 is a binding site for Mg(2+). The G2 motif stretch occupies residues 176 to 184 (DILRCRNKT). Thr184 lines the Mg(2+) pocket. The tract at residues 199–208 (YRIFDVGGQR) is G3 motif. The G4 motif stretch occupies residues 268-275 (ILFLNKVD). The segment at 327–332 (TNATDV) is G5 motif.

Belongs to the G-alpha family. In terms of assembly, g proteins are composed of 3 units; alpha, beta and gamma. The alpha chain contains the guanine nucleotide binding site. Mg(2+) is required as a cofactor.

Its function is as follows. Guanine nucleotide-binding proteins (G proteins) are involved as modulators or transducers in various transmembrane signaling systems. This Mycosarcoma maydis (Corn smut fungus) protein is Guanine nucleotide-binding protein alpha-2 subunit (GPA2).